The primary structure comprises 463 residues: HEPACAM family member 2 (463 aa).

Positions 1 to 32 (MGQDAFMELLRSMVGLSLCKIHLLLIAGSCLG) are cleaved as a signal peptide. N-linked (GlcNAc...) asparagine glycosylation is found at asparagine 86, asparagine 130, and asparagine 166. 2 Ig-like C2-type domains span residues 150-234 (PMVQ…SDII) and 236-332 (PTIY…TRFT). 2 disulfide bridges follow: cysteine 171–cysteine 220 and cysteine 271–cysteine 316. An N-linked (GlcNAc...) asparagine glycan is attached at asparagine 321. Residues 353–373 (LASITGISLFLIISMCLLFLW) form a helical membrane-spanning segment. The Cytoplasmic portion of the chain corresponds to 374–463 (KKYQPYKAIR…IPEQQQENTE (90 aa)).

Post-translationally, poly-ADP-ribosylated (PARsylated) by tankyrase TNKS during late G2 and prophase, leading to translocation to mitotic centrosomes. N-glycosylated.

The protein localises to the golgi apparatus membrane. It localises to the cytoplasm. Its subcellular location is the cytoskeleton. It is found in the spindle. The protein resides in the microtubule organizing center. The protein localises to the centrosome. It localises to the midbody. In terms of biological role, required during prometaphase for centrosome maturation. Following poly-ADP-ribosylation (PARsylation) by TNKS, translocates from the Golgi apparatus to mitotic centrosomes and plays a key role in the formation of robust microtubules for prompt movement of chromosomes: anchors AKAP9/CG-NAP, a scaffold protein of the gamma-tubulin ring complex and promotes centrosome maturation. This chain is HEPACAM family member 2 (Hepacam2), found in Mus musculus (Mouse).